The primary structure comprises 98 residues: Cystatin-A (98 aa).

Position 1 is an N-acetylmethionine (methionine 1). The Secondary area of contact motif lies at 46-50 (QVVAG).

It belongs to the cystatin family. As to expression, expressed in the skin throughout the epidermis.

The protein resides in the cytoplasm. This is an intracellular thiol proteinase inhibitor. Has an important role in desmosome-mediated cell-cell adhesion in the lower levels of the epidermis. In Homo sapiens (Human), this protein is Cystatin-A (CSTA).